A 371-amino-acid polypeptide reads, in one-letter code: Probable dual-specificity RNA methyltransferase RlmN (371 aa).

Catalysis depends on Glu113, which acts as the Proton acceptor. The Radical SAM core domain maps to 119–352; it reads QSWGNSVCVT…TTVRREMGGE (234 aa). Cysteines 126 and 357 form a disulfide. [4Fe-4S] cluster contacts are provided by Cys133, Cys137, and Cys140. Residues 182 to 183, Ser214, 237 to 239, and Asn313 each bind S-adenosyl-L-methionine; these read GE and SLH. Catalysis depends on Cys357, which acts as the S-methylcysteine intermediate.

Belongs to the radical SAM superfamily. RlmN family. [4Fe-4S] cluster is required as a cofactor.

It localises to the cytoplasm. The catalysed reaction is adenosine(2503) in 23S rRNA + 2 reduced [2Fe-2S]-[ferredoxin] + 2 S-adenosyl-L-methionine = 2-methyladenosine(2503) in 23S rRNA + 5'-deoxyadenosine + L-methionine + 2 oxidized [2Fe-2S]-[ferredoxin] + S-adenosyl-L-homocysteine. It catalyses the reaction adenosine(37) in tRNA + 2 reduced [2Fe-2S]-[ferredoxin] + 2 S-adenosyl-L-methionine = 2-methyladenosine(37) in tRNA + 5'-deoxyadenosine + L-methionine + 2 oxidized [2Fe-2S]-[ferredoxin] + S-adenosyl-L-homocysteine. Specifically methylates position 2 of adenine 2503 in 23S rRNA and position 2 of adenine 37 in tRNAs. The polypeptide is Probable dual-specificity RNA methyltransferase RlmN (Symbiobacterium thermophilum (strain DSM 24528 / JCM 14929 / IAM 14863 / T)).